A 305-amino-acid polypeptide reads, in one-letter code: Putative beta-lactamase HcpD (305 aa).

A signal peptide spans 1 to 27 (MIKSWTKKWFLILFLMASCFGHLVATT). TPR repeat units lie at residues 28 to 61 (GEKY…RMGV), 96 to 133 (HLAC…KGGV), 168 to 205 (GISC…KDGA), and 240 to 277 (GSGC…GFSG). Intrachain disulfides connect Cys-55–Cys-63, Cys-91–Cys-99, Cys-127–Cys-135, Cys-163–Cys-171, Cys-199–Cys-207, Cys-235–Cys-243, and Cys-271–Cys-279.

It belongs to the hcp beta-lactamase family.

The protein resides in the secreted. The catalysed reaction is a beta-lactam + H2O = a substituted beta-amino acid. Its function is as follows. May hydrolyze 6-aminopenicillinic acid and 7-aminocephalosporanic acid (ACA) derivatives. Binds to penicillin. The sequence is that of Putative beta-lactamase HcpD (hcpD) from Helicobacter pylori (strain J99 / ATCC 700824) (Campylobacter pylori J99).